Here is a 162-residue protein sequence, read N- to C-terminus: Large ribosomal subunit protein uL10 (162 aa).

This sequence belongs to the universal ribosomal protein uL10 family. Part of the ribosomal stalk of the 50S ribosomal subunit. The N-terminus interacts with L11 and the large rRNA to form the base of the stalk. The C-terminus forms an elongated spine to which L12 dimers bind in a sequential fashion forming a multimeric L10(L12)X complex.

Functionally, forms part of the ribosomal stalk, playing a central role in the interaction of the ribosome with GTP-bound translation factors. The sequence is that of Large ribosomal subunit protein uL10 from Vibrio cholerae serotype O1 (strain ATCC 39541 / Classical Ogawa 395 / O395).